The following is a 37-amino-acid chain: Large ribosomal subunit protein bL36c (37 aa).

It belongs to the bacterial ribosomal protein bL36 family.

It is found in the plastid. The protein resides in the chloroplast. The protein is Large ribosomal subunit protein bL36c of Phalaenopsis aphrodite subsp. formosana (Moth orchid).